Here is a 193-residue protein sequence, read N- to C-terminus: Ferredoxin-2, mitochondrial (193 aa).

A disordered region spans residues 38-70; it reads QATPEKLETSNEEEGSSSAQITAGVESDAENQR. The 103-residue stretch at 78–180 folds into the 2Fe-2S ferredoxin-type domain; the sequence is VEVVFLDRSG…GAEFTLPKIT (103 aa). Residues Cys-115, Cys-121, Cys-124, and Cys-161 each coordinate [2Fe-2S] cluster.

It belongs to the adrenodoxin/putidaredoxin family. Component of the mitochondrial core iron-sulfur cluster (ISC) complex composed of NFS1, LYRM4, NDUFAB1, ISCU, FXN, and FDX2; this complex is a heterohexamer containing two copies of each monomer. It depends on [2Fe-2S] cluster as a cofactor.

It localises to the mitochondrion. It is found in the mitochondrion matrix. Functionally, electron donor, of the core iron-sulfur cluster (ISC) assembly complex, that acts to reduce the persulfide into sulfide during [2Fe-2S] clusters assembly on the scaffolding protein ISCU. The core iron-sulfur cluster (ISC) assembly complex is involved in the de novo synthesis of a [2Fe-2S] cluster, the first step of the mitochondrial iron-sulfur protein biogenesis. This process is initiated by the cysteine desulfurase complex (NFS1:LYRM4:NDUFAB1) that produces persulfide which is delivered on the scaffold protein ISCU in a FXN-dependent manner. Then this complex is stabilized by FDX2 which provides reducing equivalents to accomplish the [2Fe-2S] cluster assembly. Finally, the [2Fe-2S] cluster is transferred from ISCU to chaperone proteins, including HSCB, HSPA9 and GLRX5. Essential for coenzyme Q biosynthesis: together with FDXR, transfers the electrons required for the hydroxylation reaction performed by COQ6. The protein is Ferredoxin-2, mitochondrial of Xenopus laevis (African clawed frog).